A 179-amino-acid chain; its full sequence is Adenine phosphoribosyltransferase (179 aa).

It belongs to the purine/pyrimidine phosphoribosyltransferase family. Homodimer.

It is found in the cytoplasm. It carries out the reaction AMP + diphosphate = 5-phospho-alpha-D-ribose 1-diphosphate + adenine. Its pathway is purine metabolism; AMP biosynthesis via salvage pathway; AMP from adenine: step 1/1. In terms of biological role, catalyzes a salvage reaction resulting in the formation of AMP, that is energically less costly than de novo synthesis. The protein is Adenine phosphoribosyltransferase of Beijerinckia indica subsp. indica (strain ATCC 9039 / DSM 1715 / NCIMB 8712).